A 321-amino-acid chain; its full sequence is uncharacterized protein (321 aa).

Residues 1–12 (MQGGREVGRESV) show a composition bias toward basic and acidic residues. The segment at 1–85 (MQGGREVGRE…GWGEFEGFQE (85 aa)) is disordered. Positions 53–67 (NANSSRLDEGLSSSR) are enriched in polar residues.

This is an uncharacterized protein from Rattus norvegicus (Rat).